Here is a 189-residue protein sequence, read N- to C-terminus: uncharacterized protein (189 aa).

Positions methionine 1–alanine 19 are cleaved as a signal peptide.

This is an uncharacterized protein from Escherichia coli (strain K12).